Consider the following 165-residue polypeptide: Ribosome maturation factor RimM (165 aa).

In terms of domain architecture, PRC barrel spans 94–165; that stretch reads EDEFYIADLN…YVVLNYQREI (72 aa).

It belongs to the RimM family. Binds ribosomal protein uS19.

It is found in the cytoplasm. An accessory protein needed during the final step in the assembly of 30S ribosomal subunit, possibly for assembly of the head region. Essential for efficient processing of 16S rRNA. May be needed both before and after RbfA during the maturation of 16S rRNA. It has affinity for free ribosomal 30S subunits but not for 70S ribosomes. This chain is Ribosome maturation factor RimM, found in Rickettsia felis (strain ATCC VR-1525 / URRWXCal2) (Rickettsia azadi).